We begin with the raw amino-acid sequence, 70 residues long: Turripeptide Gsg9.2 (70 aa).

The N-terminal stretch at 1–20 (MKVYCLLLVLLVGLVSQAHG) is a signal peptide. The Kazal-like domain occupies 21-70 (QLDKKCQMVCTMDYRPVCGSDGRTYPNKCTLTSTACMSQRSITVFHDGEC). 3 disulfides stabilise this stretch: C26–C56, C30–C49, and C38–C70.

The protein belongs to the conopeptide P-like superfamily. As to expression, expressed by the venom duct.

The protein resides in the secreted. Acts as a neurotoxin by inhibiting an ion channel. May also act as a serine protease inhibitor, since it possess the kazal serine protease inhibitor signature. The polypeptide is Turripeptide Gsg9.2 (Gemmula sogodensis (Gem-turris)).